The sequence spans 505 residues: Prenylcysteine oxidase 1 (505 aa).

Positions 1–27 (MGRVVAELVSSLLGLWLLLCSCGCPEG) are cleaved as a signal peptide. N-linked (GlcNAc...) asparagine glycans are attached at residues N196, N323, and N353.

The protein belongs to the prenylcysteine oxidase family. FAD serves as cofactor.

Its subcellular location is the lysosome. It carries out the reaction an S-polyprenyl-L-cysteine + O2 + H2O = a polyprenal + L-cysteine + H2O2. The catalysed reaction is S-(2E,6E)-farnesyl-L-cysteine + O2 + H2O = (2E,6E)-farnesal + L-cysteine + H2O2. It catalyses the reaction [(2E,6E,10E)-geranylgeranyl]-L-cysteine + O2 + H2O = (2E,6E,10E)-geranylgeranial + L-cysteine + H2O2. Prenylcysteine oxidase that cleaves the thioether bond of prenyl-L-cysteines, such as farnesylcysteine and geranylgeranylcysteine. Only active against free prenylcysteines and not prenylcysteine residues within prenylated proteins or peptides. Involved in the final step in the degradation of prenylated proteins, by degrading prenylcysteines after the protein has been degraded. The chain is Prenylcysteine oxidase 1 from Pongo abelii (Sumatran orangutan).